We begin with the raw amino-acid sequence, 827 residues long: MVSAQLHFLCLLTLYLTGAYGQEGKFSGPLKPMTFSIFEGQEPSQIIFQFKANPPAVTFELTGETDGIFKIEKDGLLYHTRVLDRETRAVHHLQLAALDSQGAIVDGPVPIIIEVKDINDNRPTFLQTKYEGSVRQNSRPGKPFMYVNATDLDDPATPNGQLFYQIVIQLPKINNVMYFQIDNKTGAISLTPEGSQVLDPIKNPYYNLVVSVKDMGGQNENSFSDTTSVDITVRENIWKAPEPVEIRENLTDPHPIKITQVQWNDPGAHYSLINKEKLPQFPFSIDQEGNIYVTQPLDREEKDSHVFFATAKDENGKPLAYPLEIRVKVIDINDNPPTCLSQVTVFEVQENEVLGSSIGIFAAHDMDEANNINSILKYRLVDQTPKVPSDELFLIDEYGGKVQLGKRSLKKQDSPQYNLTVEVSDIDFKTLCSLQVNVIDINDQIPIFERSDYGSKTLSEDTAIGSTILIIQATDDDEPFTGSSKILYKIVQGDTEGRLEVVTDPMTNTGYVKIRKPLDFETEPVTSIVFKAENPEPLVNGIEYNASSFASFELTVTDVNEVPVFPQQIFQANVSEDTAIGTKVGTVTARDPEGLTVSYSLKDNKRGWLKIDSVTGDIFSTAPLDRETESVYRVQVVATEVGGSSLSSTAYFHLVLMDVNDNPPRLAKDYTGLFFCHPLSAPGSLIFEATDDDQQSVRRPKFTFALGRESLQSDWEVSKINGTHARLSTKHTRFEEQVYDIPILINDGGQPPMEGIVSLSVTFCQCVDGSCFRPAGNQVGIPTVGMAVGILLTTFLVIGIILAVVFIRMRKDKVEDPQSPENKPLRS.

The signal sequence occupies residues 1–21 (MVSAQLHFLCLLTLYLTGAYG). Topologically, residues 22 to 786 (QEGKFSGPLK…NQVGIPTVGM (765 aa)) are extracellular. 7 Cadherin domains span residues 29–127 (PLKP…TFLQ), 128–243 (TKYE…APEP), 244–339 (VEIR…PPTC), 340–448 (LSQV…IPIF), 449–565 (ERSD…VPVF), 566–666 (PQQI…PPRL), and 667–776 (AKDY…RPAG). 7 N-linked (GlcNAc...) asparagine glycosylation sites follow: Asn-148, Asn-183, Asn-249, Asn-418, Asn-545, Asn-573, and Asn-721. Residues 787 to 807 (AVGILLTTFLVIGIILAVVFI) form a helical membrane-spanning segment. The Cytoplasmic segment spans residues 808-827 (RMRKDKVEDPQSPENKPLRS).

Liver and intestine.

It is found in the cell membrane. Its function is as follows. Cadherins are calcium-dependent cell adhesion proteins. They preferentially interact with themselves in a homophilic manner in connecting cells; cadherins may thus contribute to the sorting of heterogeneous cell types. LI-cadherin may have a role in the morphological organization of liver and intestine. This chain is Cadherin-17 (Cdh17), found in Rattus norvegicus (Rat).